Consider the following 354-residue polypeptide: MSIQTDDFSAADLPPVKRVMSAAPASPHEEAIERALRPKLFDEYVGQAKVREQLEIFIGAAKKRSEALDHVLLFGPPGLGKTTLSHIIAHELGVNLRQTSGPVLEKPKDLAALLTNLEKNDVLFIDEIHRLSPVVEEILYPALEDYQIDIMIGEGPAARSIKLDLQPFTLVGATTRAGMLTNPLRDRFGIVARLEFYTAEELGRIVRRSASLLNAPMDEEGGFEIARRSRGTPRIANRLLRRVRDYADVKGTGQITLDIANKALAMLDVDPQGFDVMDRKLLEAVIHRFDGGPVGLDNIAASIGEERDTIEDVIEPYLIQQGYLQRTPRGRIATLAAYRHLGVAPPVSGNDMFT.

A large ATPase domain (RuvB-L) region spans residues 5–197; it reads TDDFSAADLP…FGIVARLEFY (193 aa). Residues leucine 36, arginine 37, glycine 78, lysine 81, threonine 82, threonine 83, 144 to 146, arginine 187, tyrosine 197, and arginine 234 each bind ATP; that span reads EDY. Threonine 82 serves as a coordination point for Mg(2+). Positions 198 to 268 are small ATPAse domain (RuvB-S); that stretch reads TAEELGRIVR…IANKALAMLD (71 aa). A head domain (RuvB-H) region spans residues 271-354; the sequence is PQGFDVMDRK…PPVSGNDMFT (84 aa). DNA contacts are provided by arginine 307, arginine 326, and arginine 331.

It belongs to the RuvB family. In terms of assembly, homohexamer. Forms an RuvA(8)-RuvB(12)-Holliday junction (HJ) complex. HJ DNA is sandwiched between 2 RuvA tetramers; dsDNA enters through RuvA and exits via RuvB. An RuvB hexamer assembles on each DNA strand where it exits the tetramer. Each RuvB hexamer is contacted by two RuvA subunits (via domain III) on 2 adjacent RuvB subunits; this complex drives branch migration. In the full resolvosome a probable DNA-RuvA(4)-RuvB(12)-RuvC(2) complex forms which resolves the HJ.

It localises to the cytoplasm. It carries out the reaction ATP + H2O = ADP + phosphate + H(+). Functionally, the RuvA-RuvB-RuvC complex processes Holliday junction (HJ) DNA during genetic recombination and DNA repair, while the RuvA-RuvB complex plays an important role in the rescue of blocked DNA replication forks via replication fork reversal (RFR). RuvA specifically binds to HJ cruciform DNA, conferring on it an open structure. The RuvB hexamer acts as an ATP-dependent pump, pulling dsDNA into and through the RuvAB complex. RuvB forms 2 homohexamers on either side of HJ DNA bound by 1 or 2 RuvA tetramers; 4 subunits per hexamer contact DNA at a time. Coordinated motions by a converter formed by DNA-disengaged RuvB subunits stimulates ATP hydrolysis and nucleotide exchange. Immobilization of the converter enables RuvB to convert the ATP-contained energy into a lever motion, pulling 2 nucleotides of DNA out of the RuvA tetramer per ATP hydrolyzed, thus driving DNA branch migration. The RuvB motors rotate together with the DNA substrate, which together with the progressing nucleotide cycle form the mechanistic basis for DNA recombination by continuous HJ branch migration. Branch migration allows RuvC to scan DNA until it finds its consensus sequence, where it cleaves and resolves cruciform DNA. The sequence is that of Holliday junction branch migration complex subunit RuvB from Polaromonas sp. (strain JS666 / ATCC BAA-500).